A 431-amino-acid polypeptide reads, in one-letter code: Histidinol dehydrogenase (431 aa).

Residues tyrosine 127, glutamine 189, and asparagine 212 each contribute to the NAD(+) site. Substrate is bound by residues serine 237, glutamine 259, and histidine 262. Positions 259 and 262 each coordinate Zn(2+). Catalysis depends on proton acceptor residues glutamate 326 and histidine 327. Substrate contacts are provided by histidine 327, aspartate 360, glutamate 414, and histidine 419. Aspartate 360 is a Zn(2+) binding site. Residue histidine 419 coordinates Zn(2+).

The protein belongs to the histidinol dehydrogenase family. Zn(2+) is required as a cofactor.

It carries out the reaction L-histidinol + 2 NAD(+) + H2O = L-histidine + 2 NADH + 3 H(+). The protein operates within amino-acid biosynthesis; L-histidine biosynthesis; L-histidine from 5-phospho-alpha-D-ribose 1-diphosphate: step 9/9. Catalyzes the sequential NAD-dependent oxidations of L-histidinol to L-histidinaldehyde and then to L-histidine. The chain is Histidinol dehydrogenase from Xylella fastidiosa (strain 9a5c).